Reading from the N-terminus, the 105-residue chain is MYKFIFIFFTVFFLINIIEESXTXKVEDLPLPKSYTNALQQHLEKDKKRPDLQELTKKNFKTNRKSCMTNCSHVEGCFLLSPECCPKMTPTCLELDIVKEHLKKN.

Positions 1–23 (MYKFIFIFFTVFFLINIIEESXT) are cleaved as a signal peptide.

This sequence belongs to the scoloptoxin-10 family. Contains 3 disulfide bonds. In terms of tissue distribution, expressed by the venom gland.

The protein resides in the secreted. The protein is U-scoloptoxin(10)-Sm3a of Scolopendra morsitans (Tanzanian blue ringleg centipede).